A 505-amino-acid chain; its full sequence is Protein disulfide-isomerase A3 (505 aa).

Residues 1–24 (MRLRRLALFPGVALLLAAARLAAA) form the signal peptide. The Thioredoxin 1 domain occupies 25-133 (SDVLELTDDN…IVSHLKKQAG (109 aa)). Residues Cys57 and Cys60 each act as nucleophile in the active site. Residues Cys57 and Cys60 are joined by a disulfide bond. An N6-methyllysine modification is found at Lys61. Cys85 and Cys92 are oxidised to a cystine. Lys129 carries the post-translational modification N6-succinyllysine. An N6-acetyllysine modification is found at Lys152. An N6-succinyllysine modification is found at Lys218. N6-acetyllysine is present on Lys252. Thr319 is modified (phosphothreonine). Positions 343-485 (SRDGKALERF…FISYLQREAT (143 aa)) constitute a Thioredoxin 2 domain. The residue at position 362 (Lys362) is an N6-acetyllysine. Active-site nucleophile residues include Cys406 and Cys409. A disulfide bridge connects residues Cys406 and Cys409. The interval 484 to 505 (ATNPPVIQEEKPKKKKKAQEDL) is disordered. Basic and acidic residues predominate over residues 491 to 505 (QEEKPKKKKKAQEDL). Lys494 bears the N6-acetyllysine mark. A Prevents secretion from ER motif is present at residues 502-505 (QEDL).

The protein belongs to the protein disulfide isomerase family. As to quaternary structure, part of the major histocompatibility complex class I (MHC I) peptide loading complex composed of TAP1, TAP2, B2M, MHC heavy chain, TAPBP, PDIA3, and CALR. Interacts with ERP27 and CANX. Interacts with SERPINA2 and with SERPINA1. Interacts with ATP2A2. Post-translationally, within the major histocompatibility complex class I (MHC I) peptide loading complex forms reversible disulfide-linked heterodimers with TAPBP as part of its protein folding chaperone activity. This is essential to assist the dynamic assembly of the MHC I complex with high affinity antigens in the endoplasmic reticulum. In terms of processing, phosphorylated.

Its subcellular location is the endoplasmic reticulum. It is found in the endoplasmic reticulum lumen. The protein resides in the melanosome. The enzyme catalyses Catalyzes the rearrangement of -S-S- bonds in proteins.. Its function is as follows. Protein disulfide isomerase that catalyzes the formation, isomerization, and reduction or oxidation of disulfide bonds in client proteins and functions as a protein folding chaperone. Core component of the major histocompatibility complex class I (MHC I) peptide loading complex where it functions as an essential folding chaperone for TAPBP. Through TAPBP, assists the dynamic assembly of the MHC I complex with high affinity antigens in the endoplasmic reticulum. Therefore, plays a crucial role in the presentation of antigens to cytotoxic T cells in adaptive immunity. In Chlorocebus aethiops (Green monkey), this protein is Protein disulfide-isomerase A3 (PDIA3).